A 108-amino-acid chain; its full sequence is Protein S100-A15A (108 aa).

Residues 53–88 (KEPYYITELFQAADKNKDNQICFDEFLYILGKLVKD) form the EF-hand domain. Residues aspartate 66, asparagine 68, aspartate 70, glutamine 72, and glutamate 77 each contribute to the Ca(2+) site.

The protein belongs to the S-100 family.

This chain is Protein S100-A15A (S100A15A), found in Pongo abelii (Sumatran orangutan).